Reading from the N-terminus, the 174-residue chain is Crossover junction endodeoxyribonuclease RuvC (174 aa).

Residues Asp-8, Glu-67, and Asp-139 contribute to the active site. Positions 8, 67, and 139 each coordinate Mg(2+).

The protein belongs to the RuvC family. Homodimer which binds Holliday junction (HJ) DNA. The HJ becomes 2-fold symmetrical on binding to RuvC with unstacked arms; it has a different conformation from HJ DNA in complex with RuvA. In the full resolvosome a probable DNA-RuvA(4)-RuvB(12)-RuvC(2) complex forms which resolves the HJ. The cofactor is Mg(2+).

It is found in the cytoplasm. It catalyses the reaction Endonucleolytic cleavage at a junction such as a reciprocal single-stranded crossover between two homologous DNA duplexes (Holliday junction).. The RuvA-RuvB-RuvC complex processes Holliday junction (HJ) DNA during genetic recombination and DNA repair. Endonuclease that resolves HJ intermediates. Cleaves cruciform DNA by making single-stranded nicks across the HJ at symmetrical positions within the homologous arms, yielding a 5'-phosphate and a 3'-hydroxyl group; requires a central core of homology in the junction. The consensus cleavage sequence is 5'-(A/T)TT(C/G)-3'. Cleavage occurs on the 3'-side of the TT dinucleotide at the point of strand exchange. HJ branch migration catalyzed by RuvA-RuvB allows RuvC to scan DNA until it finds its consensus sequence, where it cleaves and resolves the cruciform DNA. This chain is Crossover junction endodeoxyribonuclease RuvC, found in Pseudomonas fluorescens (strain ATCC BAA-477 / NRRL B-23932 / Pf-5).